The chain runs to 444 residues: Sprouty-related, EVH1 domain-containing protein 1 (444 aa).

At serine 2 the chain carries N-acetylserine. In terms of domain architecture, WH1 spans alanine 6–isoleucine 123. N6-methyllysine is present on lysine 225. The region spanning serine 234–glutamine 286 is the KBD domain. Serine 239 carries the phosphoserine modification. Positions tryptophan 268–aspartate 287 are disordered. Serine 309 is subject to Phosphoserine. The required for interaction with TESK1 stretch occupies residues serine 333 to glycine 444. The SPR domain occupies arginine 334 to alanine 442.

Homodimer and heterodimer. Able to interact with SPRED2 to form heterodimers. Interacts (via C-terminus) with TAOK1/MARKK (via C-terminus); the interaction does not affect TAOK1 kinase activity. Interacts (via C-terminus) with TESK1 (via C-terminus); the interaction inhibits TESK1 kinase activity. Interacts with CAV1. Interacts with RAS. Interacts with palmitoyltransferase ZDHHC17/HIP14; the interaction leads to palmitoylation of SPRED1. Post-translationally, palmitoylated by ZDHHC17/HIP14. Ubiquitinated. In terms of processing, phosphorylated on tyrosine. In terms of tissue distribution, expressed in brain. Weakly expressed in lung, heart, liver, kidney, intestine, spleen, testis, thymus, colon and ovary. Also expressed in embryonic tissues such as heart, lung, liver and brain. Highly expressed in IL3-dependent hematopoietic cell lines (Ba/F3 and MC/9) and bone marrow-derived mast cells (BMMC).

Its subcellular location is the cell membrane. The protein resides in the membrane. It localises to the caveola. It is found in the nucleus. Tyrosine kinase substrate that inhibits growth-factor-mediated activation of MAP kinase. Negatively regulates hematopoiesis of bone marrow. Inhibits fibroblast growth factor (FGF)-induced retinal lens fiber differentiation, probably by inhibiting FGF-mediated phosphorylation of ERK1/2. Attenuates actin stress fiber formation via inhibition of TESK1-mediated phosphorylation of cofilin. Inhibits TGFB-induced epithelial-to-mesenchymal transition in lens epithelial cells. In Mus musculus (Mouse), this protein is Sprouty-related, EVH1 domain-containing protein 1 (Spred1).